Consider the following 394-residue polypeptide: Immune-associated nucleotide-binding protein 12 (394 aa).

Residues 45–251 (KPARTLLLVG…YMADLSHEIR (207 aa)) enclose the AIG1-type G domain. The G1 stretch occupies residues 54 to 61 (GRSGNGKS). Residues 54 to 62 (GRSGNGKSA) and Ser-75 each bind GTP. Residues 81 to 85 (GVTTA) form a G2 region. A G3 region spans residues 103 to 106 (DTPG). The G4 stretch occupies residues 173–176 (TNED). The segment at 210 to 212 (RNR) is G5. Residue Asn-211 participates in GTP binding. The stretch at 289 to 387 (NQQLRQMMER…KQMATDLQKS (99 aa)) forms a coiled coil.

Belongs to the TRAFAC class TrmE-Era-EngA-EngB-Septin-like GTPase superfamily. AIG1/Toc34/Toc159-like paraseptin GTPase family. IAN subfamily.

The sequence is that of Immune-associated nucleotide-binding protein 12 from Arabidopsis thaliana (Mouse-ear cress).